Reading from the N-terminus, the 258-residue chain is Dehydrodolichyl diphosphate synthase complex subunit nus1 (258 aa).

The chain crosses the membrane as a helical span at residues 5–21 (IFFYLALWVIQSVYGAW).

It belongs to the UPP synthase family. In terms of assembly, forms an active dehydrodolichyl diphosphate synthase complex with SPAC4D7.04c. The cofactor is Mg(2+).

The protein resides in the endoplasmic reticulum membrane. The catalysed reaction is n isopentenyl diphosphate + (2E,6E)-farnesyl diphosphate = a di-trans,poly-cis-polyprenyl diphosphate + n diphosphate. The protein operates within protein modification; protein glycosylation. Its function is as follows. With SPAC4D7.04c, forms the dehydrodolichyl diphosphate synthase (DDS) complex, an essential component of the dolichol monophosphate (Dol-P) biosynthetic machinery. Adds multiple copies of isopentenyl pyrophosphate (IPP) to farnesyl pyrophosphate (FPP) to produce dehydrodolichyl diphosphate (Dedol-PP), a precursor of dolichol which is utilized as a sugar carrier in protein glycosylation in the endoplasmic reticulum (ER). This chain is Dehydrodolichyl diphosphate synthase complex subunit nus1 (nus1), found in Schizosaccharomyces pombe (strain 972 / ATCC 24843) (Fission yeast).